The chain runs to 643 residues: Phosphomethylpyrimidine synthase (643 aa).

Substrate-binding positions include Asn248, Met277, Tyr306, His342, 362-364, 403-406, and Glu442; these read SRG and DGLR. His446 is a binding site for Zn(2+). Position 469 (Tyr469) interacts with substrate. A Zn(2+)-binding site is contributed by His510. The [4Fe-4S] cluster site is built by Cys590, Cys593, and Cys598.

The protein belongs to the ThiC family. As to quaternary structure, homodimer. The cofactor is [4Fe-4S] cluster.

It carries out the reaction 5-amino-1-(5-phospho-beta-D-ribosyl)imidazole + S-adenosyl-L-methionine = 4-amino-2-methyl-5-(phosphooxymethyl)pyrimidine + CO + 5'-deoxyadenosine + formate + L-methionine + 3 H(+). It participates in cofactor biosynthesis; thiamine diphosphate biosynthesis. Functionally, catalyzes the synthesis of the hydroxymethylpyrimidine phosphate (HMP-P) moiety of thiamine from aminoimidazole ribotide (AIR) in a radical S-adenosyl-L-methionine (SAM)-dependent reaction. In Burkholderia pseudomallei (strain 1106a), this protein is Phosphomethylpyrimidine synthase.